We begin with the raw amino-acid sequence, 497 residues long: MFFPVVFFIPFVLGAPTQKALEKILVDNNPDSVTNREKIRGIIDKAFENRVPRVQGRQGVAPPVTFAALNYGPKNNQTKKFEELNQDINEYTFESDIMLNEKQAKHIATAIENGNYRSKRQAIVDTTNFWSVSVPIFYQFDTKLSATNIANVRKAIQFWNDNSCLSFKEDNNAKNRLFLSSAGGCWSYVGKQVDMPYQMVSVGPNCDTFGTATHELMHAIGFWHQQSRADRDNYVYVDFSNIIPSQAYNFQKMAVDQAQLLNLPYDYGSVMQYYPYAFAVDSSKYTILAKENGFQNSMGQREAPAFSDIIGVNKLYNCTSQCKIQMKCSNCGITDSRNCNQCKCPRYFTGASCDSLPSGTAPNCNGAVLQATSSWETFDAKAGDPSSFSSSTDNSTNCYWHIKAPEGQQIEFKMTKTPLAAICMQECPWQSIEVNLGKFDLFGMITCCDTILNQVFTSELNMIALRGIIRYNQLTFSIQYRAVPSSKPASTNACLNQ.

A signal peptide spans 1 to 14 (MFFPVVFFIPFVLG). Residues 15-120 (APTQKALEKI…IENGNYRSKR (106 aa)) constitute a propeptide that is removed on maturation. N-linked (GlcNAc...) asparagine glycosylation is present at asparagine 76. Positions 121-319 (QAIVDTTNFW…IGVNKLYNCT (199 aa)) constitute a Peptidase M12A domain. 7 disulfides stabilise this stretch: cysteine 164–cysteine 318, cysteine 185–cysteine 206, cysteine 328–cysteine 339, cysteine 331–cysteine 342, cysteine 344–cysteine 353, cysteine 364–cysteine 398, and cysteine 427–cysteine 447. Histidine 214 serves as a coordination point for Zn(2+). Glutamate 215 is an active-site residue. Zn(2+) contacts are provided by histidine 218 and histidine 224. The N-linked (GlcNAc...) asparagine glycan is linked to asparagine 317. The EGF-like domain occupies 324 to 354 (IQMKCSNCGITDSRNCNQCKCPRYFTGASCD). The region spanning 364–483 (CNGAVLQATS…LTFSIQYRAV (120 aa)) is the CUB domain. Asparagine 394 carries N-linked (GlcNAc...) asparagine glycosylation.

It depends on Zn(2+) as a cofactor.

It is found in the secreted. In terms of biological role, metalloprotease. This Caenorhabditis elegans protein is Zinc metalloproteinase nas-28 (nas-28).